A 463-amino-acid chain; its full sequence is Soluble pyridine nucleotide transhydrogenase (463 aa).

35–44 serves as a coordination point for FAD; sequence EKQQAVGGNC.

It belongs to the class-I pyridine nucleotide-disulfide oxidoreductase family. It depends on FAD as a cofactor.

The protein resides in the cytoplasm. The catalysed reaction is NAD(+) + NADPH = NADH + NADP(+). In terms of biological role, conversion of NADPH, generated by peripheral catabolic pathways, to NADH, which can enter the respiratory chain for energy generation. The protein is Soluble pyridine nucleotide transhydrogenase of Chromohalobacter salexigens (strain ATCC BAA-138 / DSM 3043 / CIP 106854 / NCIMB 13768 / 1H11).